The following is a 334-amino-acid chain: MLNTLIVGASGYAGAELTAYLNRHPHMNITGLAVSAQSADAGKLLSELHPQLKGILDLPLQPLVDVAQAAKGIDVVFLATAHEVSHDLAPQFLAAGCVVFDLSGAFRVRDAAFYSQYYGFEHQHPDWLDKAVYGLAEWQSEDIKQAQLIAVPGCYPTASQLALKPLVDGQLLNDAQWPVINAVSGVSGAGRKASMGNSFCEVSLQPYGLFTHRHQPEIVAHLGTPVIFTPHLGNFARGILATITCRLKAGVTAQNIADAYHHAYQNKPLVRLYQQGVPALKAVVGLPFCDIGFSVQGEHLIIVATEDNLLKGAAAQAVQCMNIRFGFPETQSLL.

Cys-154 is an active-site residue.

Belongs to the NAGSA dehydrogenase family. Type 1 subfamily.

Its subcellular location is the cytoplasm. It carries out the reaction N-acetyl-L-glutamate 5-semialdehyde + phosphate + NADP(+) = N-acetyl-L-glutamyl 5-phosphate + NADPH + H(+). The protein operates within amino-acid biosynthesis; L-arginine biosynthesis; N(2)-acetyl-L-ornithine from L-glutamate: step 3/4. In terms of biological role, catalyzes the NADPH-dependent reduction of N-acetyl-5-glutamyl phosphate to yield N-acetyl-L-glutamate 5-semialdehyde. This Yersinia pseudotuberculosis serotype I (strain IP32953) protein is N-acetyl-gamma-glutamyl-phosphate reductase.